We begin with the raw amino-acid sequence, 520 residues long: MRRIKPLSEDLIRKIAAGEVVERPANVLKELIENAIDAGSDRIDIFIEKGGKRLIQVVDNGEGIHPDDMLDCVKRYTTSKISSEDDLYSISSYGFRGEALYSISSVSKFSIVSRPEDLSVGKELYIEGGVFRSFTETGAPVGTKVRVKDIFFNTPVRKKFLKSERTEFVHCLKTFINYAVVNTDIHFRLYHNGRELMNLPPSDLKKRITYIYPELSGRLLELDYTDETGRIYGYISTDERFKKEGIVYVNKRPVKNRELRKIIKSLISEKFYVLFIELPPYFVDHNVHPAKIEVKFKNDTAVKNLVREGLKALETPFKKGVTFDYTVSQRKGSYGKEKVFDLLGQVENTFIVVYYDGDIYLIDQHVVHERINYEILMEDLREDGFIKRKILNRNITHSISELEKALIEDKKGTLERSGFSFDIDGYNLVIKEIPVFVSEDQALDIFFRILMDEDAETVDYVIGEIACKLSVKSGDILSDEKAKLILKRWFETDSPNLCPHGRPVYYKVSIDDVKKAIGRG.

Belongs to the DNA mismatch repair MutL/HexB family.

This protein is involved in the repair of mismatches in DNA. It is required for dam-dependent methyl-directed DNA mismatch repair. May act as a 'molecular matchmaker', a protein that promotes the formation of a stable complex between two or more DNA-binding proteins in an ATP-dependent manner without itself being part of a final effector complex. This is DNA mismatch repair protein MutL from Persephonella marina (strain DSM 14350 / EX-H1).